We begin with the raw amino-acid sequence, 290 residues long: Glutamyl-Q tRNA(Asp) synthetase (290 aa).

L-glutamate contacts are provided by residues 9–13 (RFAPS) and glutamate 45. A 'HIGH' region motif is present at residues 12–22 (PSPSGSLHFGS). Zn(2+) contacts are provided by cysteine 101, cysteine 103, tyrosine 115, and cysteine 119. Positions 170 and 188 each coordinate L-glutamate. A 'KMSKS' region motif is present at residues 226-230 (KLSKQ). Lysine 229 is a binding site for ATP.

It belongs to the class-I aminoacyl-tRNA synthetase family. GluQ subfamily. Zn(2+) is required as a cofactor.

Its function is as follows. Catalyzes the tRNA-independent activation of glutamate in presence of ATP and the subsequent transfer of glutamate onto a tRNA(Asp). Glutamate is transferred on the 2-amino-5-(4,5-dihydroxy-2-cyclopenten-1-yl) moiety of the queuosine in the wobble position of the QUC anticodon. This chain is Glutamyl-Q tRNA(Asp) synthetase, found in Shewanella amazonensis (strain ATCC BAA-1098 / SB2B).